The primary structure comprises 277 residues: MKQLYGVIGNPIGHSLSPLMHNDAFEHLGIDAHYHAFLVEEEMLGEAVKGLKALGVSGINVTTPHKVAIMKYLDEIDPLAKQIGAVNTVVHRNGKLVGYNTDGIGYVRSLQAISKEPLRHKRMLLLGAGGACRAIYCSLVAAGVKEIDIANRTVETAKQLIASSKERVVSKALSLEKATEAQENYDVLIQTTTIGMHPHVQHTPMQIGSLKQGAIVSDIIYNPFETKFLHDAKLSGAIVQNGIDMFVYQGALAFEMWTGMMPDINRMKQLVIRKLGG.

Residues 15–17 (SLS) and threonine 62 contribute to the shikimate site. The Proton acceptor role is filled by lysine 66. Shikimate-binding residues include asparagine 87 and aspartate 102. Residues 127-131 (GAGGA) and isoleucine 219 contribute to the NADP(+) site. Tyrosine 221 serves as a coordination point for shikimate. Glycine 242 contributes to the NADP(+) binding site.

Belongs to the shikimate dehydrogenase family. In terms of assembly, homodimer.

The enzyme catalyses shikimate + NADP(+) = 3-dehydroshikimate + NADPH + H(+). It participates in metabolic intermediate biosynthesis; chorismate biosynthesis; chorismate from D-erythrose 4-phosphate and phosphoenolpyruvate: step 4/7. Involved in the biosynthesis of the chorismate, which leads to the biosynthesis of aromatic amino acids. Catalyzes the reversible NADPH linked reduction of 3-dehydroshikimate (DHSA) to yield shikimate (SA). The polypeptide is Shikimate dehydrogenase (NADP(+)) (Bacillus cytotoxicus (strain DSM 22905 / CIP 110041 / 391-98 / NVH 391-98)).